The chain runs to 208 residues: MVLDELISEFDRGLRSLTGISRMSRPVPVPAQPPAAELTPAERTHAAGLMRVNHVGEVCAQALYQAQKFTARTASAKATFEEAAREEEDHLAWTAHRLKELDSRPSLLNPLWYAGALAIGVAAGTLGDKVSLGFMAETERQVENHLEGHLSELPAADTASRAIVDQMRIDEVKHGKAATDAGGVELPLPARMLMRAASKVMTSTAYYL.

6 residues coordinate Fe cation: Glu57, Glu87, His90, Glu139, Glu171, and His174.

The protein belongs to the COQ7 family. Fe cation is required as a cofactor.

It localises to the cell membrane. It carries out the reaction a 5-methoxy-2-methyl-3-(all-trans-polyprenyl)benzene-1,4-diol + AH2 + O2 = a 3-demethylubiquinol + A + H2O. The protein operates within cofactor biosynthesis; ubiquinone biosynthesis. Functionally, catalyzes the hydroxylation of 2-nonaprenyl-3-methyl-6-methoxy-1,4-benzoquinol during ubiquinone biosynthesis. This Burkholderia vietnamiensis (strain G4 / LMG 22486) (Burkholderia cepacia (strain R1808)) protein is 3-demethoxyubiquinol 3-hydroxylase.